The chain runs to 200 residues: H-2 class I histocompatibility antigen, Q9 alpha chain (200 aa).

Positions 1-21 are cleaved as a signal peptide; the sequence is MALTMLLLLVAAALTLIETRA. Residues 22-111 form an alpha-1 region; the sequence is GQHSLQYFHT…AQSYYNQSKG (90 aa). Residues 22 to 200 are Extracellular-facing; it reads GQHSLQYFHT…RYLELGKETL (179 aa). An N-linked (GlcNAc...) asparagine glycan is attached at N107. Residues 112–200 are alpha-2; the sequence is GSHTLQWMYG…RYLELGKETL (89 aa). C122 and C185 are oxidised to a cystine.

Belongs to the MHC class I family. As to quaternary structure, heterodimer of an alpha chain and a beta chain (beta-2-microglobulin).

Its subcellular location is the membrane. Functionally, involved in the presentation of foreign antigens to the immune system. In Mus musculus (Mouse), this protein is H-2 class I histocompatibility antigen, Q9 alpha chain (H2-Q9).